The sequence spans 438 residues: Minor capsid protein p49 (438 aa).

The protein belongs to the asfivirus p49 structural protein family.

It localises to the virion. Functionally, together with the penton and the other minor capsid proteins (M1249L, p17), forms a complicated network immediately below the outer capsid shell, stabilizing the whole capsid. Plays an essential role in the formation of infectious virus particles. Especially required for the formation of the capsid vertices. During virion assembly, associates with the membrane and probably mediates the docking of the penton complex to the inner membrane, where it recruits the capsomers to form the penton core. In Ornithodoros (relapsing fever ticks), this protein is Minor capsid protein p49.